We begin with the raw amino-acid sequence, 334 residues long: D-aspartate oxidase 1 (334 aa).

FAD contacts are provided by D35, R36, S43, G307, and T312. Residues 332 to 334 carry the Microbody targeting signal motif; that stretch reads SKL.

The protein belongs to the DAMOX/DASOX family. FAD serves as cofactor. As to expression, expressed in the intestinal cells, hypodermis and in unidentified cells in the head in adult hermaphrodites.

It localises to the peroxisome matrix. The enzyme catalyses D-aspartate + O2 + H2O = oxaloacetate + H2O2 + NH4(+). It catalyses the reaction D-glutamate + O2 + H2O = H2O2 + 2-oxoglutarate + NH4(+). Not inhibited by potassium bromide or thiolactomycin. Functionally, selectively catalyzes the oxidative deamination of acidic amino acids. May play a role in the egg-laying events and early development of the worm, in addition to quality control of the germ cells. The polypeptide is D-aspartate oxidase 1 (ddo-1) (Caenorhabditis elegans).